The chain runs to 247 residues: GTP cyclohydrolase 1 type 2 homolog (247 aa).

A divalent metal cation-binding residues include His-63, His-64, Asp-101, His-215, and Glu-219.

This sequence belongs to the GTP cyclohydrolase I type 2/NIF3 family. In terms of assembly, toroid-shaped homohexamer. In the hexamer, 3 dimers assemble to form a ring-like structure surrounding a central hole.

Provides significant protection from radiation damage and may be involved in the degradation of radiation-damaged nucleotides. The polypeptide is GTP cyclohydrolase 1 type 2 homolog (ybgI) (Salmonella typhi).